The following is a 658-amino-acid chain: Endoglucanase 3 (658 aa).

The N-terminal stretch at 1-23 is a signal peptide; that stretch reads MQLKNFYPKMSVLGIATVMALTA. Cys-24 carries the N-palmitoyl cysteine lipid modification. Cys-24 carries S-diacylglycerol cysteine lipidation. Positions 24–265 are excised as a propeptide; it reads CGDENTQALF…TDSLFIDNIY (242 aa). The interval 42–83 is disordered; the sequence is ENQVPVSSSDMSPTSSDAVIDPTSSSAAVVDPSTLPAEGPIT. Residues 45 to 58 show a composition bias toward low complexity; the sequence is VPVSSSDMSPTSSD. The region spanning 87 to 277 is the CBM11 domain; it reads GLGTLVDDFE…DSSEVEKDQP (191 aa). The active-site Proton donor is the Glu-448. Residue Glu-597 is the Nucleophile of the active site.

It belongs to the glycosyl hydrolase 5 (cellulase A) family. In terms of assembly, monomer. In terms of processing, may be a lipoprotein and may be glycosylated.

The protein resides in the membrane. The enzyme catalyses Endohydrolysis of (1-&gt;4)-beta-D-glucosidic linkages in cellulose, lichenin and cereal beta-D-glucans.. Its function is as follows. Exhibits both endoglucanase and cellobiosidase activities. The sequence is that of Endoglucanase 3 (cel-3) from Fibrobacter succinogenes (strain ATCC 19169 / S85).